Reading from the N-terminus, the 135-residue chain is Cystatin-1 (135 aa).

Positions methionine 1–serine 24 are cleaved as a signal peptide. Residues glutamine 86–glycine 90 carry the Secondary area of contact motif.

Belongs to the cystatin family. Phytocystatin subfamily.

This Zea mays (Maize) protein is Cystatin-1 (RAMDAZC7).